Reading from the N-terminus, the 74-residue chain is Conotoxin ArMKLT2-041 (74 aa).

A signal peptide spans Met1 to Ala22. Residues Asp23–Thr46 constitute a propeptide that is removed on maturation. At Gln49 the chain carries Pyrrolidone carboxylic acid. 3 cysteine pairs are disulfide-bonded: Cys50–Cys65, Cys57–Cys68, and Cys64–Cys73.

This sequence belongs to the conotoxin O1 superfamily. In terms of tissue distribution, expressed by the venom duct.

The protein resides in the secreted. This chain is Conotoxin ArMKLT2-041, found in Conus arenatus (Sand-dusted cone).